The sequence spans 489 residues: Argininosuccinate lyase (489 aa).

A disordered region spans residues 1 to 20 (MSEPSAAVGQRPGGESAPAH).

The protein belongs to the lyase 1 family. Argininosuccinate lyase subfamily.

It localises to the cytoplasm. It catalyses the reaction 2-(N(omega)-L-arginino)succinate = fumarate + L-arginine. The protein operates within amino-acid biosynthesis; L-arginine biosynthesis; L-arginine from L-ornithine and carbamoyl phosphate: step 3/3. The chain is Argininosuccinate lyase from Acidothermus cellulolyticus (strain ATCC 43068 / DSM 8971 / 11B).